Here is a 267-residue protein sequence, read N- to C-terminus: 14-3-3-like protein GF14 chi (267 aa).

Alanine 2 is modified (N-acetylalanine). Residues serine 72 and serine 195 each carry the phosphoserine modification. Threonine 216 is subject to Phosphothreonine. Serine 267 carries the phosphoserine modification.

This sequence belongs to the 14-3-3 family. In terms of assembly, interacts with TPK1. Interacts with the isocitrate dehydrogenase IDH3, and malate dehydrogenases MDH1 and MDH2. Interacts with DREB1A and DREB1B in the nucleus. Interacts with CINV1.

Its subcellular location is the nucleus. The protein resides in the cytoplasm. Its function is as follows. Is associated with a DNA binding complex that binds to the G box, a well-characterized cis-acting DNA regulatory element found in plant genes. Involved in the regulation of nutrient metabolism. The sequence is that of 14-3-3-like protein GF14 chi (GRF1) from Arabidopsis thaliana (Mouse-ear cress).